We begin with the raw amino-acid sequence, 416 residues long: uncharacterized protein (416 aa).

4 residues coordinate [4Fe-4S] cluster: C63, C75, C78, and C152. Q253, F280, E300, and D348 together coordinate S-adenosyl-L-methionine. C374 (nucleophile) is an active-site residue.

Belongs to the class I-like SAM-binding methyltransferase superfamily. RNA M5U methyltransferase family.

This is an uncharacterized protein from Agrobacterium fabrum (strain C58 / ATCC 33970) (Agrobacterium tumefaciens (strain C58)).